A 213-amino-acid polypeptide reads, in one-letter code: Pyridoxine/pyridoxamine 5'-phosphate oxidase (213 aa).

Residues 9-12 and K67 contribute to the substrate site; that span reads RLEY. FMN-binding positions include 62–67, 77–78, R83, K84, and Q106; these read RIVLLK and YT. Substrate is bound by residues Y124, R128, and S132. FMN contacts are provided by residues 141 to 142 and W185; that span reads QS. 191–193 contacts substrate; it reads RLH. R195 provides a ligand contact to FMN.

The protein belongs to the pyridoxamine 5'-phosphate oxidase family. Homodimer. The cofactor is FMN.

The enzyme catalyses pyridoxamine 5'-phosphate + O2 + H2O = pyridoxal 5'-phosphate + H2O2 + NH4(+). It catalyses the reaction pyridoxine 5'-phosphate + O2 = pyridoxal 5'-phosphate + H2O2. The protein operates within cofactor metabolism; pyridoxal 5'-phosphate salvage; pyridoxal 5'-phosphate from pyridoxamine 5'-phosphate: step 1/1. It functions in the pathway cofactor metabolism; pyridoxal 5'-phosphate salvage; pyridoxal 5'-phosphate from pyridoxine 5'-phosphate: step 1/1. Functionally, catalyzes the oxidation of either pyridoxine 5'-phosphate (PNP) or pyridoxamine 5'-phosphate (PMP) into pyridoxal 5'-phosphate (PLP). This chain is Pyridoxine/pyridoxamine 5'-phosphate oxidase, found in Chromobacterium violaceum (strain ATCC 12472 / DSM 30191 / JCM 1249 / CCUG 213 / NBRC 12614 / NCIMB 9131 / NCTC 9757 / MK).